Reading from the N-terminus, the 265-residue chain is Undecaprenyl-diphosphatase 1 (265 aa).

The next 7 helical transmembrane spans lie at 4-24, 42-62, 84-104, 108-128, 184-204, 217-237, and 245-265; these read IITA…PISS, AKTF…ILYH, FHVF…HDII, LFQP…MIFA, SEFS…LDLL, MFAV…VTFL, and LKPF…FVLL.

It belongs to the UppP family.

It localises to the cell membrane. It catalyses the reaction di-trans,octa-cis-undecaprenyl diphosphate + H2O = di-trans,octa-cis-undecaprenyl phosphate + phosphate + H(+). Catalyzes the dephosphorylation of undecaprenyl diphosphate (UPP). Confers resistance to bacitracin. This is Undecaprenyl-diphosphatase 1 from Bacillus thuringiensis subsp. konkukian (strain 97-27).